Consider the following 420-residue polypeptide: ATP phosphoribosyltransferase regulatory subunit (420 aa).

Belongs to the class-II aminoacyl-tRNA synthetase family. HisZ subfamily. In terms of assembly, heteromultimer composed of HisG and HisZ subunits.

The protein resides in the cytoplasm. The protein operates within amino-acid biosynthesis; L-histidine biosynthesis; L-histidine from 5-phospho-alpha-D-ribose 1-diphosphate: step 1/9. Required for the first step of histidine biosynthesis. May allow the feedback regulation of ATP phosphoribosyltransferase activity by histidine. This is ATP phosphoribosyltransferase regulatory subunit from Bacillus cereus (strain B4264).